The chain runs to 305 residues: tRNA dimethylallyltransferase (305 aa).

Position 8 to 15 (8 to 15 (GPTASGKT)) interacts with ATP. 10 to 15 (TASGKT) serves as a coordination point for substrate. The interval 33 to 36 (DSQQ) is interaction with substrate tRNA.

Belongs to the IPP transferase family. Monomer. The cofactor is Mg(2+).

The catalysed reaction is adenosine(37) in tRNA + dimethylallyl diphosphate = N(6)-dimethylallyladenosine(37) in tRNA + diphosphate. In terms of biological role, catalyzes the transfer of a dimethylallyl group onto the adenine at position 37 in tRNAs that read codons beginning with uridine, leading to the formation of N6-(dimethylallyl)adenosine (i(6)A). The chain is tRNA dimethylallyltransferase from Anaeromyxobacter sp. (strain K).